Reading from the N-terminus, the 45-residue chain is Putative potassium channel blocker (45 aa).

As to expression, expressed by the venom gland.

The protein resides in the secreted. Functionally, inhibits potassium channels. This chain is Putative potassium channel blocker, found in Hottentotta tamulus (Eastern Indian scorpion).